Reading from the N-terminus, the 347-residue chain is Selenide, water dikinase (347 aa).

Cys17 is an active-site residue. ATP contacts are provided by residues Lys20 and 48–50 (TRD). Asp51 is a binding site for Mg(2+). ATP-binding positions include Asp68, Asp91, and 139-141 (GHS). Asp91 serves as a coordination point for Mg(2+). Position 227 (Asp227) interacts with Mg(2+).

Belongs to the selenophosphate synthase 1 family. Class I subfamily. In terms of assembly, homodimer. It depends on Mg(2+) as a cofactor.

The catalysed reaction is hydrogenselenide + ATP + H2O = selenophosphate + AMP + phosphate + 2 H(+). Synthesizes selenophosphate from selenide and ATP. The sequence is that of Selenide, water dikinase from Enterobacter sp. (strain 638).